The sequence spans 756 residues: Probable chemoreceptor y4sI (756 aa).

2 consecutive transmembrane segments (helical) span residues 26–46 (VCVA…TSVA) and 330–350 (LIKI…MAIL). HAMP domains follow at residues 353-406 (RSIS…ARVA) and 434-486 (DEQA…ETIR). The Methyl-accepting transducer domain maps to 491–720 (QAASMSSIVS…ESDAACRSLN (230 aa)). Residues 736-756 (GGGSSTRQPQSPPTQRYFMSR) are disordered.

This sequence belongs to the methyl-accepting chemotaxis (MCP) protein family.

The protein resides in the cell membrane. Its function is as follows. Chemotactic-signal transducers respond to changes in the concentration of attractants and repellents in the environment, transduce a signal from the outside to the inside of the cell, and facilitate sensory adaptation through the variation of the level of methylation. Attractants increase the level of methylation while repellents decrease the level of methylation. This Sinorhizobium fredii (strain NBRC 101917 / NGR234) protein is Probable chemoreceptor y4sI.